We begin with the raw amino-acid sequence, 191 residues long: Protein GrpE (191 aa).

Over residues 1-13 the composition is skewed to basic and acidic residues; that stretch reads MSEKKNKKEKLAE. The segment at 1–40 is disordered; it reads MSEKKNKKEKLAEEIEQEELNSLDESVETVEEEATEETLT. The span at 14–40 shows a compositional bias: acidic residues; it reads EIEQEELNSLDESVETVEEEATEETLT.

The protein belongs to the GrpE family. As to quaternary structure, homodimer.

It localises to the cytoplasm. Its function is as follows. Participates actively in the response to hyperosmotic and heat shock by preventing the aggregation of stress-denatured proteins, in association with DnaK and GrpE. It is the nucleotide exchange factor for DnaK and may function as a thermosensor. Unfolded proteins bind initially to DnaJ; upon interaction with the DnaJ-bound protein, DnaK hydrolyzes its bound ATP, resulting in the formation of a stable complex. GrpE releases ADP from DnaK; ATP binding to DnaK triggers the release of the substrate protein, thus completing the reaction cycle. Several rounds of ATP-dependent interactions between DnaJ, DnaK and GrpE are required for fully efficient folding. The chain is Protein GrpE from Listeria innocua serovar 6a (strain ATCC BAA-680 / CLIP 11262).